The following is a 149-amino-acid chain: Sperm surface protein Sp17 (149 aa).

The segment covering 83-96 has biased composition (basic and acidic residues); it reads CEQELAKSSGREET. The interval 83–114 is disordered; it reads CEQELAKSSGREETPVTPFEESTEEEREQEEA. A compositionally biased stretch (acidic residues) spans 103-113; that stretch reads ESTEEEREQEE. Residues 112–141 form the IQ domain; it reads EEAAALKIQSLFRGHVAREEVKKMKSDKNE.

Homodimer. May interact with ROPN1. Testis- and sperm-specific.

The protein resides in the membrane. Its function is as follows. Sperm surface zona pellucida binding protein. Helps to bind spermatozoa to the zona pellucida with high affinity. Might function in binding zona pellucida and carbohydrates. This Mus musculus (Mouse) protein is Sperm surface protein Sp17 (Spa17).